The following is a 642-amino-acid chain: Ribosome biogenesis protein BOP1 homolog (642 aa).

The interval 1–28 (MIHKRMNSTELERTSKKIDDYDSSDEED) is disordered. Residues 10–20 (ELERTSKKIDD) are compositionally biased toward basic and acidic residues. WD repeat units lie at residues 311 to 351 (GHSG…CLKT), 353 to 393 (SLDG…DRHR), 472 to 510 (RLKGLMTVLSFHPSEPFLFVGTQRYIRIYDLAKCQLKKK), 513 to 552 (TGSQWMSCMHVDFRGDNVFVGGHDRVFSWIDLQLSSKPWK), 556 to 595 (HHTAAIRGVTQHARCPLIATVSDDSTAIVYYARISSDSLK), and 612 to 642 (KNGLSILAAIFHPSQPWLITAHVDGSIALFT).

The protein belongs to the WD repeat BOP1/ERB1 family.

The protein localises to the nucleus. It localises to the nucleolus. Its subcellular location is the nucleoplasm. In terms of biological role, required for maturation of ribosomal RNAs and formation of the large ribosomal subunit. In Brugia malayi (Filarial nematode worm), this protein is Ribosome biogenesis protein BOP1 homolog.